The sequence spans 307 residues: UDP-3-O-acyl-N-acetylglucosamine deacetylase (307 aa).

Zn(2+) is bound by residues His-78, His-241, and Asp-245. His-268 (proton donor) is an active-site residue.

It belongs to the LpxC family. Zn(2+) is required as a cofactor.

It catalyses the reaction a UDP-3-O-[(3R)-3-hydroxyacyl]-N-acetyl-alpha-D-glucosamine + H2O = a UDP-3-O-[(3R)-3-hydroxyacyl]-alpha-D-glucosamine + acetate. Its pathway is glycolipid biosynthesis; lipid IV(A) biosynthesis; lipid IV(A) from (3R)-3-hydroxytetradecanoyl-[acyl-carrier-protein] and UDP-N-acetyl-alpha-D-glucosamine: step 2/6. In terms of biological role, catalyzes the hydrolysis of UDP-3-O-myristoyl-N-acetylglucosamine to form UDP-3-O-myristoylglucosamine and acetate, the committed step in lipid A biosynthesis. The chain is UDP-3-O-acyl-N-acetylglucosamine deacetylase from Acidovorax sp. (strain JS42).